Reading from the N-terminus, the 530-residue chain is FSD1-like protein (530 aa).

At Met1 the chain carries N-acetylmethionine. Residues 102–141 (KQEQARKSQELQSQISQCNNALENSEELLEFATRSLDIKE) adopt a coiled-coil conformation. The 58-residue stretch at 137–194 (LDIKEPEEFSKAARQIKDRVTMASAFRLSLKPKVSDNMTHLMVDFSQERQMLQTLKFL) folds into the COS domain. One can recognise a Fibronectin type-III domain in the interval 196–300 (VPKAPEIDPV…DPVTLETKAL (105 aa)). Positions 300–506 (LNFNLDNSSS…LSTGMQVPSA (207 aa)) constitute a B30.2/SPRY domain. The segment at 322 to 366 (WDPTGGKGQESKIKGKENKGRSGTPSPKRTSVGSRPPAVRGSRDR) is disordered. Basic and acidic residues predominate over residues 330-341 (QESKIKGKENKG). Residues 342 to 354 (RSGTPSPKRTSVG) show a composition bias toward polar residues. Residues Ser520 and Ser523 each carry the phosphoserine modification.

This Homo sapiens (Human) protein is FSD1-like protein (FSD1L).